Reading from the N-terminus, the 239-residue chain is Phosphoglycolate phosphatase (239 aa).

Residue Asp-14 is the Nucleophile of the active site. Residues Asp-14 and Asp-16 each contribute to the Mg(2+) site. Residue Lys-160 participates in substrate binding. Asp-183 and Asp-187 together coordinate Mg(2+).

This sequence belongs to the archaeal SPP-like hydrolase family. Mg(2+) serves as cofactor.

It carries out the reaction 2-phosphoglycolate + H2O = glycolate + phosphate. Functionally, catalyzes the dephosphorylation of 2-phosphoglycolate. The polypeptide is Phosphoglycolate phosphatase (Aeropyrum pernix (strain ATCC 700893 / DSM 11879 / JCM 9820 / NBRC 100138 / K1)).